Here is a 458-residue protein sequence, read N- to C-terminus: MSSVATIKRNIIPPHLEVKGGRPLSGILKVSGAKNSSLALMAAALLTKEKLLIQNVPELTDIEVMSEILRNLGAKLTKTNNSIEINSESIHNVELPYELVHSLRASFFCVGPLLTRLGEAKIPLPGGCNIGARPVDEHINGLKALGAEVEVINDVVKAKVSTKDKRLLGANITLKYPSVGATETILMASCLASGKTTISNPAREPEIQDLAKMLNSMGAKVFGAGTKRITILGVESLSGTSHCVIPDRIEAGTFLIAAAITRSPLIIGPVIPNHLSAVISKLKECGCSISQHGNHHLKIIPIEISGVDITTSPFPGFPTDLQAPFMSLMATAKGSSKIKERVFENRMQHVLELNKMGACIYLENNTAYIKGVKELVGSNVEGGDLRSSAAIILACLSAKGNSIFTGLEHLDRGYEKLEEKLTNAGSIISRKFDQITSHSSFSNKIISEDNIDTQKNAA.

Position 34–35 (34–35) interacts with phosphoenolpyruvate; sequence KN. UDP-N-acetyl-alpha-D-glucosamine is bound at residue arginine 104. Cysteine 128 acts as the Proton donor in catalysis. Residue cysteine 128 is modified to 2-(S-cysteinyl)pyruvic acid O-phosphothioketal. 2 residues coordinate UDP-N-acetyl-alpha-D-glucosamine: aspartate 320 and valine 342.

The protein belongs to the EPSP synthase family. MurA subfamily.

Its subcellular location is the cytoplasm. The catalysed reaction is phosphoenolpyruvate + UDP-N-acetyl-alpha-D-glucosamine = UDP-N-acetyl-3-O-(1-carboxyvinyl)-alpha-D-glucosamine + phosphate. It functions in the pathway cell wall biogenesis; peptidoglycan biosynthesis. Functionally, cell wall formation. Adds enolpyruvyl to UDP-N-acetylglucosamine. The chain is UDP-N-acetylglucosamine 1-carboxyvinyltransferase from Prochlorococcus marinus (strain NATL1A).